The following is a 344-amino-acid chain: Meiotic recombination protein DMC1 homolog (344 aa).

The interval 1–22 (MMASLKAEETSQMQLVEREEND) is disordered. 133–140 (GEFRSGKT) is a binding site for ATP. R235 contacts dsDNA. SsDNA-binding residues include R235, F238, R241, R247, and R315. Residues R241 and R247 each contribute to the dsDNA site.

Belongs to the RecA family. DMC1 subfamily. As to quaternary structure, double stacked ring-shaped homooctamer. Interacts with BRCA2A and BRCA2B. As to expression, expressed in mitotic and/or meiotic tissues. Expressed in roots, leaves and anthers and carpels of young fower buds.

Its subcellular location is the nucleus. May participate in meiotic recombination, specifically in homologous strand assimilation, which is required for the resolution of meiotic double-strand breaks. Mediates interhomolog recombination during meiosis. The chain is Meiotic recombination protein DMC1 homolog from Arabidopsis thaliana (Mouse-ear cress).